Here is a 566-residue protein sequence, read N- to C-terminus: Zinc finger protein 704 (566 aa).

Disordered regions lie at residues 1 to 148 (MQAR…ARGA), 166 to 203 (DFRR…LDQE), and 253 to 324 (PLVR…DEAD). Residues 12–31 (LGSRRGGAAPAPAPEAAALG) are compositionally biased toward low complexity. Residues 32–55 (LPPPGPSPAAAPGSWRPPLPPPRG) are compositionally biased toward pro residues. Positions 56-72 (TGPSRAAAASSPVLLLL) are enriched in low complexity. The segment covering 91–100 (RVTEKPRGVA) has biased composition (basic and acidic residues). The span at 101-128 (EEEDDDEEEDEEVVVEVVDGDEDDEDAE) shows a compositional bias: acidic residues. The span at 186 to 203 (EDVRTADTKKTSRVLDQE) shows a compositional bias: basic and acidic residues. The segment covering 267–290 (SGSWKEGAPSSSSSSGYWSWSAPS) has biased composition (low complexity). The C2H2-type zinc-finger motif lies at 346–371 (FKCLWKSCGKVLNTAAGIQKHIRAVH). Serine 378 and serine 381 each carry phosphoserine. Disordered regions lie at residues 409–436 (VSPS…CAKT) and 497–535 (PVSP…PRGE). A sufficient for binding to RE2 sequence motifs region spans residues 471 to 566 (GSAKFTPNGS…WKKACQRFID (96 aa)). A CR1 motif is present at residues 537–541 (KKCRK). Positions 555-559 (CRWKK) match the CR2 motif.

The protein resides in the nucleus. Transcription factor which binds to RE2 sequence elements in the MYOD1 enhancer. This chain is Zinc finger protein 704, found in Mus musculus (Mouse).